A 313-amino-acid polypeptide reads, in one-letter code: Biotin synthase (313 aa).

A Radical SAM core domain is found at 28–258 (NFGNDIELCS…LFPQARLRLS (231 aa)). The [4Fe-4S] cluster site is built by Cys46, Cys50, and Cys53. [2Fe-2S] cluster is bound by residues Cys90, Cys121, Cys181, and Arg256.

It belongs to the radical SAM superfamily. Biotin synthase family. In terms of assembly, homodimer. [4Fe-4S] cluster is required as a cofactor. The cofactor is [2Fe-2S] cluster.

The enzyme catalyses (4R,5S)-dethiobiotin + (sulfur carrier)-SH + 2 reduced [2Fe-2S]-[ferredoxin] + 2 S-adenosyl-L-methionine = (sulfur carrier)-H + biotin + 2 5'-deoxyadenosine + 2 L-methionine + 2 oxidized [2Fe-2S]-[ferredoxin]. It participates in cofactor biosynthesis; biotin biosynthesis; biotin from 7,8-diaminononanoate: step 2/2. Its function is as follows. Catalyzes the conversion of dethiobiotin (DTB) to biotin by the insertion of a sulfur atom into dethiobiotin via a radical-based mechanism. The protein is Biotin synthase of Francisella tularensis subsp. mediasiatica (strain FSC147).